The following is a 455-amino-acid chain: DNA repair protein RadA (455 aa).

A C4-type zinc finger spans residues 11-28 (CVGCGYVHPKWLGRCPEC). Residue 97–104 (GEPGIGKS) coordinates ATP. The short motif at 250-254 (KNRFG) is the RadA KNRFG motif element. Residues 350-455 (DIYVNVAGGI…IAEIFSKAKA (106 aa)) are lon-protease-like.

This sequence belongs to the RecA family. RadA subfamily.

Functionally, DNA-dependent ATPase involved in processing of recombination intermediates, plays a role in repairing DNA breaks. Stimulates the branch migration of RecA-mediated strand transfer reactions, allowing the 3' invading strand to extend heteroduplex DNA faster. Binds ssDNA in the presence of ADP but not other nucleotides, has ATPase activity that is stimulated by ssDNA and various branched DNA structures, but inhibited by SSB. Does not have RecA's homology-searching function. This is DNA repair protein RadA from Treponema pallidum (strain Nichols).